The chain runs to 246 residues: MGRAFEYRKATKLKRWGHMAKTFTRLGKQIAIAVKAGGPEPENNPTLRGVIATCKRENMPKDNIERAIKNAMGKDTSDYKGMTYEGYGPHGVAVFVDTLTDNTTRTVADVRSVFNKFGGNLGTTGSLAFLFDHKCVFTFKKKEGMDMEELILDLIDYNVEDEFDEDEEEGTITIYGDPKSYAAIQKHLEECGFEEVGGDFTYIPNDLKDVTPEQRETLDKMVERLEEFDDVQTVYTNMKPASEEEE.

Belongs to the TACO1 family.

The protein localises to the cytoplasm. This is Probable transcriptional regulatory protein BVU_3469 from Phocaeicola vulgatus (strain ATCC 8482 / DSM 1447 / JCM 5826 / CCUG 4940 / NBRC 14291 / NCTC 11154) (Bacteroides vulgatus).